Consider the following 146-residue polypeptide: Transcriptional regulator MraZ (146 aa).

SpoVT-AbrB domains lie at 4–46 (SYEK…SKKS) and 75–118 (TIEV…SKEK).

The protein belongs to the MraZ family. As to quaternary structure, forms oligomers.

The protein localises to the cytoplasm. The protein resides in the nucleoid. This Mycoplasma mobile (strain ATCC 43663 / 163K / NCTC 11711) (Mesomycoplasma mobile) protein is Transcriptional regulator MraZ.